An 84-amino-acid polypeptide reads, in one-letter code: Beta-defensin 119 (84 aa).

Positions 1–21 (MKFLFLFLAILLATEVPVISG) are cleaved as a signal peptide. 3 disulfide bridges follow: Cys-28/Cys-55, Cys-35/Cys-49, and Cys-39/Cys-56.

It belongs to the beta-defensin family. Abundant expression in the male reproductive tract only. Expressed abundantly in testis, while expression in epididymis decreased gradually from caput to cauda.

The protein localises to the secreted. Its function is as follows. Has antibacterial activity. This chain is Beta-defensin 119 (DEFB119), found in Macaca mulatta (Rhesus macaque).